The sequence spans 138 residues: Acidic phospholipase A2 VpaPLA2 (138 aa).

The N-terminal stretch at 1-16 (MRTLWIVAVCLMGVEG) is a signal peptide. Intrachain disulfides connect C42–C131, C44–C60, C59–C111, C65–C138, C66–C104, C73–C97, and C91–C102. 3 residues coordinate Ca(2+): Y43, G45, and G47. Residue H63 is part of the active site. D64 provides a ligand contact to Ca(2+). D105 is an active-site residue.

This sequence belongs to the phospholipase A2 family. Group II subfamily. D49 sub-subfamily. Requires Ca(2+) as cofactor. As to expression, expressed by the venom gland.

The protein localises to the secreted. It catalyses the reaction a 1,2-diacyl-sn-glycero-3-phosphocholine + H2O = a 1-acyl-sn-glycero-3-phosphocholine + a fatty acid + H(+). Its function is as follows. Snake venom phospholipase A2 (PLA2) that causes a sudden decrease of arterial blood pressure when injected into rat, but is not lethal. When co-injected with an uncharacterized basic protein (which did not show any enzymatic activity, but also causes a drop in blood pressure), this synergistical mixture is lethal. PLA2 catalyzes the calcium-dependent hydrolysis of the 2-acyl groups in 3-sn-phosphoglycerides. The sequence is that of Acidic phospholipase A2 VpaPLA2 from Daboia palaestinae (Palestine viper).